A 435-amino-acid polypeptide reads, in one-letter code: Elongation factor 1-alpha (435 aa).

The region spanning 4–229 (KPHLNLIVIG…DQLEIPPKPV (226 aa)) is the tr-type G domain. The segment at 13-20 (GHVDHGKS) is G1. Position 13 to 20 (13 to 20 (GHVDHGKS)) interacts with GTP. S20 is a binding site for Mg(2+). The interval 69-73 (GVTIN) is G2. The segment at 90-93 (DAPG) is G3. GTP contacts are provided by residues 90-94 (DAPGH) and 152-155 (NKMD). A G4 region spans residues 152–155 (NKMD). Residues 193–195 (VAP) form a G5 region.

It belongs to the TRAFAC class translation factor GTPase superfamily. Classic translation factor GTPase family. EF-Tu/EF-1A subfamily.

The protein resides in the cytoplasm. It catalyses the reaction GTP + H2O = GDP + phosphate + H(+). Its function is as follows. GTP hydrolase that promotes the GTP-dependent binding of aminoacyl-tRNA to the A-site of ribosomes during protein biosynthesis. This chain is Elongation factor 1-alpha, found in Sulfurisphaera tokodaii (strain DSM 16993 / JCM 10545 / NBRC 100140 / 7) (Sulfolobus tokodaii).